We begin with the raw amino-acid sequence, 1002 residues long: TOG array regulator of axonemal microtubules protein 2 (1002 aa).

5 disordered regions span residues 54–74 (SSVL…EDQS), 131–214 (KRRL…SAQE), 332–351 (ETRS…KVQV), 402–421 (PLRG…PRRN), and 426–450 (LQRK…GFAR).

It belongs to the Crescerin family.

The sequence is that of TOG array regulator of axonemal microtubules protein 2 (Togaram2) from Mus musculus (Mouse).